Consider the following 470-residue polypeptide: UDP-N-acetylmuramate--L-alanine ligase (470 aa).

118 to 124 (GTHGKTT) is an ATP binding site.

It belongs to the MurCDEF family.

It localises to the cytoplasm. It catalyses the reaction UDP-N-acetyl-alpha-D-muramate + L-alanine + ATP = UDP-N-acetyl-alpha-D-muramoyl-L-alanine + ADP + phosphate + H(+). It participates in cell wall biogenesis; peptidoglycan biosynthesis. Cell wall formation. The polypeptide is UDP-N-acetylmuramate--L-alanine ligase (Cereibacter sphaeroides (strain KD131 / KCTC 12085) (Rhodobacter sphaeroides)).